The primary structure comprises 92 residues: Small ribosomal subunit protein bS20 (92 aa).

The interval 1–23 (MANTTSAKKATRKIARRTDVNKA) is disordered.

Belongs to the bacterial ribosomal protein bS20 family.

Its function is as follows. Binds directly to 16S ribosomal RNA. The protein is Small ribosomal subunit protein bS20 of Rhizobium leguminosarum bv. trifolii (strain WSM2304).